The chain runs to 131 residues: Classical arabinogalactan protein 1 (131 aa).

The N-terminal stretch at 1–22 (MAFSKSLVFVLLAALLISSAVA) is a signal peptide. The segment at 22 to 110 (AQSPAPAPSN…APGPAQGGAV (89 aa)) is disordered. Residues 50–60 (APAPEVSPSPS) show a composition bias toward pro residues. Over residues 61–72 (PAAALTPESSAS) the composition is skewed to low complexity. Gly108 is lipidated: GPI-anchor amidated glycine. Residues 109 to 131 (AVSNKFASFGSVAVMLTAAVLVI) constitute a propeptide, removed in mature form.

Belongs to the classical AGP family. O-glycosylated on the hydroxyproline residues. As to expression, predominantly expressed in flowers and at a lower level in roots and leaves.

The protein localises to the cell membrane. Proteoglycan that seems to be implicated in diverse developmental roles such as differentiation, cell-cell recognition, embryogenesis and programmed cell death. The chain is Classical arabinogalactan protein 1 (AGP1) from Arabidopsis thaliana (Mouse-ear cress).